The chain runs to 980 residues: Putative leucine-rich repeat receptor-like serine/threonine-protein kinase At2g24130 (980 aa).

An N-terminal signal peptide occupies residues 1–20 (MDYCSLLVVSFLITVMTVLA). Topologically, residues 21 to 593 (SKENDHELIK…ACKKKHKYPS (573 aa)) are extracellular. N-linked (GlcNAc...) asparagine glycans are attached at residues Asn-55 and Asn-88. LRR repeat units lie at residues 65–89 (STQVIELDISGRDLGGEISPSIANL), 90–113 (TGLTVLDLSRNFFVGKIPPEIGSL), 115–138 (ETLKQLSLSENLLHGNIPQELGLL), 139–162 (NRLVYLDLGSNRLNGSIPVQLFCN), 165–189 (SSSLQYIDLSNNSLTGEIPLNYHCH), 191–214 (KELRFLLLWSNKLTGTVPSSLSNS), 215–238 (TNLKWMDLESNMLSGELPSQVISK), and 240–263 (PQLQFLYLSYNHFVSHNNNTNLEP). N-linked (GlcNAc...) asparagine glycosylation is found at Asn-152, Asn-162, Asn-175, and Asn-213. N-linked (GlcNAc...) asparagine glycosylation is found at Asn-257 and Asn-270. 12 LRR repeats span residues 271–295 (SSDLQELELAGNSLGGEITSSVRHL), 296–320 (SVNLVQIHLDQNRIHGSIPPEISNL), 322–344 (NLTLLNLSSNLLSGPIPRELCKL), 345–370 (SKLERVYLSNNHLTGEIPMELGDIPR), 372–391 (GLLDVSRNNLSGSIPDSFGN), 392–416 (LSQLRRLLLYGNHLSGTVPQSLGKC), 417–440 (INLEILDLSHNNLTGTIPVEVVSN), 442–463 (RNLKLYLNLSSNHLSGPIPLEL), 464–490 (SKMDMVLSVDLSSNELSGKIPPQLGSC), 491–514 (IALEHLNLSRNGFSSTLPSSLGQL), 515–537 (PYLKELDVSFNRLTGAIPPSFQQ), and 539–563 (STLKHLNFSFNLLSGNVSDKGSFSK). Asn-322 and Asn-327 each carry an N-linked (GlcNAc...) asparagine glycan. 2 N-linked (GlcNAc...) asparagine glycosylation sites follow: Asn-380 and Asn-391. 2 N-linked (GlcNAc...) asparagine glycosylation sites follow: Asn-428 and Asn-449. N-linked (GlcNAc...) asparagine glycosylation is present at Asn-497. N-linked (GlcNAc...) asparagine glycans are attached at residues Asn-545 and Asn-554. A helical transmembrane segment spans residues 594-614 (VLLPVLLSLIATPVLCVFGYP). Over 615–980 (LVQRSRFGKN…SQETQGEASS (366 aa)) the chain is Cytoplasmic. Thr-658 is subject to Phosphothreonine. Residues 661 to 960 (FNASSLIGSG…HEMGRLKEYL (300 aa)) enclose the Protein kinase domain. Residues 667-675 (IGSGRFGHV) and Lys-689 contribute to the ATP site. The residue at position 775 (Tyr-775) is a Phosphotyrosine. Asp-788 (proton acceptor) is an active-site residue. Position 841 is a phosphotyrosine (Tyr-841).

It belongs to the protein kinase superfamily. Ser/Thr protein kinase family.

Its subcellular location is the cell membrane. It carries out the reaction L-seryl-[protein] + ATP = O-phospho-L-seryl-[protein] + ADP + H(+). It catalyses the reaction L-threonyl-[protein] + ATP = O-phospho-L-threonyl-[protein] + ADP + H(+). This Arabidopsis thaliana (Mouse-ear cress) protein is Putative leucine-rich repeat receptor-like serine/threonine-protein kinase At2g24130.